Here is a 350-residue protein sequence, read N- to C-terminus: Kelch domain-containing protein 9 (350 aa).

3 Kelch repeats span residues 39–89 (RFYL…LVGG), 91–137 (WLCV…SHTC), and 325–350 (QLYLVGGFGEDGRTASPQVCILEFFI).

In terms of assembly, interacts with CCNA1.

The polypeptide is Kelch domain-containing protein 9 (Klhdc9) (Mus musculus (Mouse)).